Reading from the N-terminus, the 214-residue chain is 3,4-dihydroxy-2-butanone 4-phosphate synthase (214 aa).

D-ribulose 5-phosphate is bound by residues 40–41 (RE), Asp45, 153–157 (RRGHT), and Glu177. Glu41 contacts Mg(2+). Mg(2+) is bound at residue His156.

Belongs to the DHBP synthase family. In terms of assembly, homodimer. It depends on Mg(2+) as a cofactor. Mn(2+) serves as cofactor.

The catalysed reaction is D-ribulose 5-phosphate = (2S)-2-hydroxy-3-oxobutyl phosphate + formate + H(+). It participates in cofactor biosynthesis; riboflavin biosynthesis; 2-hydroxy-3-oxobutyl phosphate from D-ribulose 5-phosphate: step 1/1. Catalyzes the conversion of D-ribulose 5-phosphate to formate and 3,4-dihydroxy-2-butanone 4-phosphate. The sequence is that of 3,4-dihydroxy-2-butanone 4-phosphate synthase from Rhodospirillum rubrum (strain ATCC 11170 / ATH 1.1.1 / DSM 467 / LMG 4362 / NCIMB 8255 / S1).